The primary structure comprises 302 residues: UDP-N-acetylenolpyruvoylglucosamine reductase (302 aa).

The 166-residue stretch at 27-192 (KVGGAVDYLA…LSAKFALRPG (166 aa)) folds into the FAD-binding PCMH-type domain. Arg171 is a catalytic residue. The active-site Proton donor is the Ser221. Residue Glu291 is part of the active site.

The protein belongs to the MurB family. FAD serves as cofactor.

It is found in the cytoplasm. The enzyme catalyses UDP-N-acetyl-alpha-D-muramate + NADP(+) = UDP-N-acetyl-3-O-(1-carboxyvinyl)-alpha-D-glucosamine + NADPH + H(+). It functions in the pathway cell wall biogenesis; peptidoglycan biosynthesis. Cell wall formation. In Streptococcus suis (strain 98HAH33), this protein is UDP-N-acetylenolpyruvoylglucosamine reductase.